Reading from the N-terminus, the 501-residue chain is GMP synthase [glutamine-hydrolyzing] (501 aa).

Positions 1–185 (MVLVVDYGSQ…LFNVCKLEKN (185 aa)) constitute a Glutamine amidotransferase type-1 domain. Residue Cys-75 is the Nucleophile of the active site. Active-site residues include His-159 and Glu-161. The GMPS ATP-PPase domain maps to 186–376 (WKIGDLVEEK…LGIPDRIINR (191 aa)). Residue 213-219 (SGGVDSS) coordinates ATP.

As to quaternary structure, homodimer.

The enzyme catalyses XMP + L-glutamine + ATP + H2O = GMP + L-glutamate + AMP + diphosphate + 2 H(+). The protein operates within purine metabolism; GMP biosynthesis; GMP from XMP (L-Gln route): step 1/1. Functionally, catalyzes the synthesis of GMP from XMP. The sequence is that of GMP synthase [glutamine-hydrolyzing] from Thermotoga petrophila (strain ATCC BAA-488 / DSM 13995 / JCM 10881 / RKU-1).